The primary structure comprises 292 residues: Oxidative stress-responsive serine-rich protein 1 (292 aa).

The tract at residues 24–178 is disordered; sequence ASGSVASLSV…ATQVPQASLK (155 aa). A compositionally biased stretch (basic residues) spans 65 to 83; sequence STRKSSRGAVRTQRRRRSK. A phosphothreonine mark is found at Thr-143 and Thr-233.

This Homo sapiens (Human) protein is Oxidative stress-responsive serine-rich protein 1 (OSER1).